The sequence spans 527 residues: MEPNSYGSGKAAVGDGVGAPMLQTAPAPAPIPSANAPPPFLVKTYDMVDDPSTDKIVSWSPTNNSFVVWDPPEFAKDLLPKYFKHNNFSSFVRQLNTYGFRKVDPDRWEFANEGFLRGQKHLLKSISRRKPAHGHAQQQQQPHGNAQQQMQPPGHSASVGACVEVGKFGLEEEVERLKRDKNVLMQELVRLRQQQQATDNQLQGMVQRLQGMELRQQQMMSFLAKAVNRPGFLAQFVQQQNESNKRIAEGSKKRRIKQDIESQDPSVTPADGQIVKYQPGINEAAKAMLRELSKLDSSPRLDNFSNSPESFLIGDGSPQSNASSGRVSGVTLQEVPPTSGKPLLNTASAIAGQSLLPATSEMQSSHLGTCSEIINNQLSNIIPLVGGEDLHPGSLSASDMIMPELSQLQGILPENNTDVIGCDSFMDTSAVEGKVGLDIIGSCLSPGADIDWQSGLLDEIEEFPSVGDPFWEKFLQSPCSPDAAMDDDISNTSETKPQINGWDKTQNMEHLTEQMGATNIKQQKHMI.

A DNA-binding region spans residues 39 to 133 (PFLVKTYDMV…KSISRRKPAH (95 aa)). 3 disordered regions span residues 128–158 (RRKP…HSAS), 241–273 (NESN…ADGQ), and 297–341 (SSPR…TSGK). Low complexity predominate over residues 134–152 (GHAQQQQQPHGNAQQQMQP). The segment covering 317–326 (SPQSNASSGR) has biased composition (polar residues).

Belongs to the HSF family. Homotrimer. Post-translationally, exhibits temperature-dependent phosphorylation.

It localises to the nucleus. Its function is as follows. DNA-binding protein that specifically binds heat shock promoter elements (HSE) and activates transcription. In Solanum lycopersicum (Tomato), this protein is Heat shock factor protein HSF8 (HSF8).